The following is a 443-amino-acid chain: Thymidine phosphorylase (443 aa).

Belongs to the thymidine/pyrimidine-nucleoside phosphorylase family. Homodimer.

It catalyses the reaction thymidine + phosphate = 2-deoxy-alpha-D-ribose 1-phosphate + thymine. It participates in pyrimidine metabolism; dTMP biosynthesis via salvage pathway; dTMP from thymine: step 1/2. Its function is as follows. The enzymes which catalyze the reversible phosphorolysis of pyrimidine nucleosides are involved in the degradation of these compounds and in their utilization as carbon and energy sources, or in the rescue of pyrimidine bases for nucleotide synthesis. This is Thymidine phosphorylase from Shewanella pealeana (strain ATCC 700345 / ANG-SQ1).